The following is a 43-amino-acid chain: Protein PsbN (43 aa).

A helical transmembrane segment spans residues 7–27 (VAIFISCLLVSFTGYALYTAF).

The protein belongs to the PsbN family.

Its subcellular location is the plastid. The protein resides in the chloroplast thylakoid membrane. May play a role in photosystem I and II biogenesis. In Huperzia lucidula (Shining clubmoss), this protein is Protein PsbN.